The following is a 247-amino-acid chain: Probable transcriptional regulatory protein LBF_0056 (247 aa).

It belongs to the TACO1 family.

Its subcellular location is the cytoplasm. In Leptospira biflexa serovar Patoc (strain Patoc 1 / Ames), this protein is Probable transcriptional regulatory protein LBF_0056.